We begin with the raw amino-acid sequence, 139 residues long: NADH-quinone oxidoreductase subunit A (139 aa).

3 helical membrane passes run 16-36 (GLFI…ASLL), 69-89 (LVAM…AWAV), and 94-114 (VGWE…AGLV).

This sequence belongs to the complex I subunit 3 family. As to quaternary structure, NDH-1 is composed of 14 different subunits. Subunits NuoA, H, J, K, L, M, N constitute the membrane sector of the complex.

It is found in the cell inner membrane. It carries out the reaction a quinone + NADH + 5 H(+)(in) = a quinol + NAD(+) + 4 H(+)(out). In terms of biological role, NDH-1 shuttles electrons from NADH, via FMN and iron-sulfur (Fe-S) centers, to quinones in the respiratory chain. The immediate electron acceptor for the enzyme in this species is believed to be ubiquinone. Couples the redox reaction to proton translocation (for every two electrons transferred, four hydrogen ions are translocated across the cytoplasmic membrane), and thus conserves the redox energy in a proton gradient. This is NADH-quinone oxidoreductase subunit A from Chromohalobacter salexigens (strain ATCC BAA-138 / DSM 3043 / CIP 106854 / NCIMB 13768 / 1H11).